A 956-amino-acid chain; its full sequence is Valine--tRNA ligase (956 aa).

Positions 43–53 (PNITGNLHIGH) match the 'HIGH' region motif. The 'KMSKS' region signature appears at 556–560 (KMSKS). An ATP-binding site is contributed by K559. A coiled-coil region spans residues 889-920 (PKEKELKNLNKEISKIQLAINKLQQRLSNEEF).

Belongs to the class-I aminoacyl-tRNA synthetase family. ValS type 1 subfamily. In terms of assembly, monomer.

Its subcellular location is the cytoplasm. It carries out the reaction tRNA(Val) + L-valine + ATP = L-valyl-tRNA(Val) + AMP + diphosphate. Catalyzes the attachment of valine to tRNA(Val). As ValRS can inadvertently accommodate and process structurally similar amino acids such as threonine, to avoid such errors, it has a 'posttransfer' editing activity that hydrolyzes mischarged Thr-tRNA(Val) in a tRNA-dependent manner. The chain is Valine--tRNA ligase from Buchnera aphidicola subsp. Baizongia pistaciae (strain Bp).